Reading from the N-terminus, the 336-residue chain is MGNCLHQAELSPSTENSSQLNLEDLWDFPYNGNDSFPEINYDASLEAAAPCYSCNLLDDSSLPFFILASVLGILASSTVLFMLFRPLFRWQLCPGWPVLAQLAVGSALFSIVVPILAPGLGNTRSSALCSLGYCVWYGSAFAQALLLGCHASLGPKLGAGQVPGLTLGLTVGLWGAAALLTVPITLASGASDGLCTPIYSTELKALQATHTVACFAIFVLLPLGLFGAKGVKKALGMGPGPWMTILWIWFIFWWPHGVVLGLDFLVRSKLLLLPTCLAQQVLDLLLNLAEALTIVHCVATPLLLALFCHQATRTLLPSLPLPERWSSPVDTLGSKS.

Residues 1-63 lie on the Extracellular side of the membrane; sequence MGNCLHQAEL…CNLLDDSSLP (63 aa). N-linked (GlcNAc...) asparagine glycans are attached at residues asparagine 16 and asparagine 33. Intrachain disulfides connect cysteine 51-cysteine 276 and cysteine 129-cysteine 195. Residues 64 to 84 traverse the membrane as a helical segment; sequence FFILASVLGILASSTVLFMLF. At 85 to 95 the chain is on the cytoplasmic side; that stretch reads RPLFRWQLCPG. The chain crosses the membrane as a helical span at residues 96-116; it reads WPVLAQLAVGSALFSIVVPIL. Residues 117–129 lie on the Extracellular side of the membrane; the sequence is APGLGNTRSSALC. A helical transmembrane segment spans residues 130–153; it reads SLGYCVWYGSAFAQALLLGCHASL. Topologically, residues 154 to 166 are cytoplasmic; that stretch reads GPKLGAGQVPGLT. The chain crosses the membrane as a helical span at residues 167 to 187; that stretch reads LGLTVGLWGAAALLTVPITLA. Topologically, residues 188–207 are extracellular; it reads SGASDGLCTPIYSTELKALQ. The helical transmembrane segment at 208-228 threads the bilayer; that stretch reads ATHTVACFAIFVLLPLGLFGA. At 229 to 244 the chain is on the cytoplasmic side; sequence KGVKKALGMGPGPWMT. The chain crosses the membrane as a helical span at residues 245 to 265; sequence ILWIWFIFWWPHGVVLGLDFL. At 266 to 287 the chain is on the extracellular side; that stretch reads VRSKLLLLPTCLAQQVLDLLLN. The helical transmembrane segment at 288–308 threads the bilayer; that stretch reads LAEALTIVHCVATPLLLALFC. Residues 309–336 are Cytoplasmic-facing; the sequence is HQATRTLLPSLPLPERWSSPVDTLGSKS.

The protein belongs to the G-protein coupled receptor 1 family. Atypical chemokine receptor subfamily.

The protein localises to the early endosome. Its subcellular location is the recycling endosome. It localises to the membrane. Atypical chemokine receptor that controls chemokine levels and localization via high-affinity chemokine binding that is uncoupled from classic ligand-driven signal transduction cascades, resulting instead in chemokine sequestration, degradation, or transcytosis. Also known as interceptor (internalizing receptor) or chemokine-scavenging receptor or chemokine decoy receptor. Has a promiscuous chemokine-binding profile, interacting with inflammatory chemokines of both the CXC and the CC subfamilies but not with homeostatic chemokines. Acts as a receptor for chemokines including CCL2, CCL5, CCL7, CCL11, CCL13, CCL14, CCL17, CXCL5, CXCL6, IL8/CXCL8, CXCL11, GRO, RANTES, MCP-1 and TARC. May regulate chemokine bioavailability and, consequently, leukocyte recruitment through two distinct mechanisms: when expressed in endothelial cells, it sustains the abluminal to luminal transcytosis of tissue-derived chemokines and their subsequent presentation to circulating leukocytes; when expressed in erythrocytes, serves as blood reservoir of cognate chemokines but also as a chemokine sink, buffering potential surges in plasma chemokine levels. This Sapajus apella (Brown-capped capuchin) protein is Atypical chemokine receptor 1 (ACKR1).